The primary structure comprises 628 residues: tRNA uridine 5-carboxymethylaminomethyl modification enzyme MnmG (628 aa).

Residues 14-19 (GAGHAG), Val-126, and Ser-181 contribute to the FAD site. 273-287 (GPRYCPSIEDKVVRF) lines the NAD(+) pocket. Gln-370 serves as a coordination point for FAD.

The protein belongs to the MnmG family. In terms of assembly, homodimer. Heterotetramer of two MnmE and two MnmG subunits. FAD serves as cofactor.

It localises to the cytoplasm. Functionally, NAD-binding protein involved in the addition of a carboxymethylaminomethyl (cmnm) group at the wobble position (U34) of certain tRNAs, forming tRNA-cmnm(5)s(2)U34. This Pelobacter propionicus (strain DSM 2379 / NBRC 103807 / OttBd1) protein is tRNA uridine 5-carboxymethylaminomethyl modification enzyme MnmG.